The primary structure comprises 320 residues: MNLVRTAMLLAFMTALFMFVGFLIGGRAGMMIAFVIAAGMNFFSYWNSDRMVLSAYRAQQVDERNAPEFFAIVRDLARNAGLPMPKVYLYDSPQPNAFATGRNPENAAVAASTGLLQALSPEEVAGVMAHELAHIQNRDTLTMTITATLAGAISMLGNFAFFFGGNRENNNNPLGFVGVLVAMIVAPLAAMLVQMAISRTREYSADRRGAEICGNPLWLASALGKIARGAAHVPNEDAERNPATAHMFIINPLSGERMDNLFSTHPNTENRIAALQDMAQGGMNVSTPPVRAANPSRKSRSVPDTGLGRGGSQPPKGPWS.

A run of 2 helical transmembrane segments spans residues 6 to 26 (TAMLLAFMTALFMFVGFLIGG) and 28 to 48 (AGMMIAFVIAAGMNFFSYWNS). Position 130 (H130) interacts with Zn(2+). Residue E131 is part of the active site. A Zn(2+)-binding site is contributed by H134. 2 consecutive transmembrane segments (helical) span residues 145–165 (ITATLAGAISMLGNFAFFFGG) and 173–193 (PLGFVGVLVAMIVAPLAAMLV). Zn(2+) is bound at residue E202. Positions 281–320 (GGMNVSTPPVRAANPSRKSRSVPDTGLGRGGSQPPKGPWS) are disordered.

The protein belongs to the peptidase M48B family. It depends on Zn(2+) as a cofactor.

The protein resides in the cell inner membrane. The chain is Protease HtpX homolog from Rhizobium leguminosarum bv. trifolii (strain WSM2304).